The primary structure comprises 264 residues: Protein-L-isoaspartate O-methyltransferase (264 aa).

Positions Met1–Ala49 are disordered. Polar residues predominate over residues Pro24–Thr35. Ser112 is a catalytic residue.

It belongs to the methyltransferase superfamily. L-isoaspartyl/D-aspartyl protein methyltransferase family.

The protein localises to the cytoplasm. It carries out the reaction [protein]-L-isoaspartate + S-adenosyl-L-methionine = [protein]-L-isoaspartate alpha-methyl ester + S-adenosyl-L-homocysteine. In terms of biological role, catalyzes the methyl esterification of L-isoaspartyl residues in peptides and proteins that result from spontaneous decomposition of normal L-aspartyl and L-asparaginyl residues. It plays a role in the repair and/or degradation of damaged proteins. The chain is Protein-L-isoaspartate O-methyltransferase from Bordetella avium (strain 197N).